Here is a 210-residue protein sequence, read N- to C-terminus: Proteasome subunit beta (210 aa).

Positions 1-9 are cleaved as a propeptide — removed in mature form; by autocatalysis; it reads MDNDKHLKG. T10 acts as the Nucleophile in catalysis.

The protein belongs to the peptidase T1B family. In terms of assembly, the 20S proteasome core is composed of 14 alpha and 14 beta subunits that assemble into four stacked heptameric rings, resulting in a barrel-shaped structure. The two inner rings, each composed of seven catalytic beta subunits, are sandwiched by two outer rings, each composed of seven alpha subunits. The catalytic chamber with the active sites is on the inside of the barrel. Has a gated structure, the ends of the cylinder being occluded by the N-termini of the alpha-subunits. Is capped at one or both ends by the proteasome regulatory ATPase, PAN.

It localises to the cytoplasm. It carries out the reaction Cleavage of peptide bonds with very broad specificity.. Its activity is regulated as follows. The formation of the proteasomal ATPase PAN-20S proteasome complex, via the docking of the C-termini of PAN into the intersubunit pockets in the alpha-rings, triggers opening of the gate for substrate entry. Interconversion between the open-gate and close-gate conformations leads to a dynamic regulation of the 20S proteasome proteolysis activity. Functionally, component of the proteasome core, a large protease complex with broad specificity involved in protein degradation. The protein is Proteasome subunit beta of Methanococcoides burtonii (strain DSM 6242 / NBRC 107633 / OCM 468 / ACE-M).